The following is a 506-amino-acid chain: Ribose import ATP-binding protein RbsA (506 aa).

ABC transporter domains lie at 5 to 241 (LALT…VGRR) and 254 to 498 (RDAA…TSDV). 37–44 (GENGAGKS) provides a ligand contact to ATP.

This sequence belongs to the ABC transporter superfamily. Ribose importer (TC 3.A.1.2.1) family. As to quaternary structure, the complex is composed of an ATP-binding protein (RbsA), two transmembrane proteins (RbsC) and a solute-binding protein (RbsB).

The protein localises to the cell inner membrane. It carries out the reaction D-ribose(out) + ATP + H2O = D-ribose(in) + ADP + phosphate + H(+). Part of the ABC transporter complex RbsABC involved in ribose import. Responsible for energy coupling to the transport system. This Burkholderia mallei (strain ATCC 23344) protein is Ribose import ATP-binding protein RbsA.